We begin with the raw amino-acid sequence, 219 residues long: Probable N-acetyltransferase camello (219 aa).

Helical transmembrane passes span 42 to 62 and 64 to 84; these read FYFIIIVACASIFMCTSSYVL and LTSLVALLAVGWYGLYLEFHG. The 157-residue stretch at 62–218 folds into the N-acetyltransferase domain; that stretch reads LSLTSLVALL…TVIYYRYDIK (157 aa).

It belongs to the camello family. At the beginning of gastrulation, expressed in deep cells of the presumptive mesoderm. At later gastrulation stages, expressed at the interface between already involuted and preinvoluted mesoderm. At late neurula and tailbud stages, expressed in the deep mass of cells lying ventrally and laterally to the closed blastopore.

Its subcellular location is the golgi apparatus membrane. Functionally, plays a role in regulation of gastrulation, possibly by controlled reduction of cell adhesion which is necessary for optimal cell motility. The polypeptide is Probable N-acetyltransferase camello (Xenopus laevis (African clawed frog)).